The sequence spans 206 residues: Outer-membrane lipoprotein carrier protein (206 aa).

The N-terminal stretch at 1–23 (MKPLFPMLTAAAIAAGLAAPAQA) is a signal peptide.

This sequence belongs to the LolA family. In terms of assembly, monomer.

It localises to the periplasm. In terms of biological role, participates in the translocation of lipoproteins from the inner membrane to the outer membrane. Only forms a complex with a lipoprotein if the residue after the N-terminal Cys is not an aspartate (The Asp acts as a targeting signal to indicate that the lipoprotein should stay in the inner membrane). This chain is Outer-membrane lipoprotein carrier protein, found in Chromobacterium violaceum (strain ATCC 12472 / DSM 30191 / JCM 1249 / CCUG 213 / NBRC 12614 / NCIMB 9131 / NCTC 9757 / MK).